The primary structure comprises 3068 residues: MLQKSYHGVVSQASYDNTCGRGSQIRRDRSRAGVRFNTEYNPVLLTVSKQIAQDGEGYHCRANLINKITTKQQLAFISELQPTQSTLKVLPVADGRKMPIEPIAIVGASCRLPGSSNSLDSLWELLADGGEAWSSVPADRFNEAAFHHPNASDPNGTNNHQGGHFIDGDIRDFDHAFFHLSPQHAAAMDPQQRILLELVYEAFESAGWAREACAGSRTAVFAAIFGTDYDRNLCKDLLDLPVYHSVGTGIAILANRISHAFDLRGPSLTLDTGCSGGLVALHEACQSLRNGESDAALVAAANLQLMPDHYIGMSSQHMVSSTGRCYPFDLRGDGYGRGEGFAVVALKRLSDALRDQDPIRSVILNSGINQDGYTASGITHPNRVAQADLIRDTYDRVHLHPQDTVYVEAHGTGTVAGDNEELAAIAEVFAGPDRSLPLHVGSNKGSIGHTESTSGLASLLKVILMLDHQVIPPVAGFTNPKPGLPLDRIKIPTQRLPWPLTEGMVPRISINSFGYGGTNAHAIMERGPRTYDASCNTTPTYSPRLFVLSANNKGSLRSLLESYVNWIQKHPNIPLADISYTLCHRRSALPWRFSCVADSESSLLDTLERGVKLISTRPPPSKRQVIYVFTGQGAQWAGMGHELLLETTPSSVFRDSIRTSRDILYELGATWDLEAELLGQDGGGRINKAELAQPATTAVQIGIVMLLRSQGVRPWAVVGHSSGEIAAAYAAGRLSHRMALRVAFHRGFMAGVSKDRGLPPGAMLSIGLGQGDAAPYLHDLTHGEAVIACINSPNSVTVSGDAAAVDEVMARIIARGDGTFCRKLHVDTAYHSHHMRAVADEYCIRLGDLDLGIDERISAPGGQRDKEEVKYFSSNSGLAWVSGFAASYWVDNLISPVRFSDAIQTVAREHHKHNGGLALFVEIGPHAALAGPIRQCLAASNVPKLEYNYLSALKRGAGAVETMLQVVGHLFERGVRVNFDEISALTPGFHTAAVRPDLPSYCWDYSSKHWHESRLSREYRMRREPYHHLLGVRMTELASTEPRWRHMVGLATLPWLAHHIIDGLIIFPGACYVCMVIEAVRQLAKEQYSDQALEAVSLRDVSFLRALVVPDAPSRVEMQLSLKHRADASPLGFTFSVTALSDGKWHVFCTGVVEGVMTLDKPETEPVMLDPRPKQDWLNRTMVIPEELYNEMTADGNTYGPSFRGLSSLTMSTDGSMATAVIEVPDIAASMPAQYQASHILHPTTLDSMFHVGIPMMKRRHGAGSVMPVHIGELLISTQTPALNSQGSKLDVSAKLTSSHFRASNIDMTIVSGGFPVMYASAIESRSLAAHVDGAHGTQDEHGICYELAWRCDLNFLRTSDLTRSSILADLVSFLCFKTAHLSIAELGESPGVLAPAFLAAVGVHRGTVTSYDVVERGNQPIDEGCKRLTGYPIRRRALDPDSSLESQGFAPNTYDVVLASDLGSLCYVSTLVKNDGVVVVVLKPGSDDNWQSTLRKTWPSHDIQLTVVDSVNGNRIILARNDKTKDSHSSSRVHILTHSALQTTPSWATALIGKLHEMGYEMSSGSLSQDVIQRSSDARNTCIMVIDDLAQPILSDRACFNSAITLLRQEHRIIWLSLDSPSSMHQITGVARTAHAENDNLRLTVVHAALEAIGSPPLVDLLCHCLTYAQNRDSLAPYEREYRVSRDAAVLIPRLRSSDCLNRAIRASEKASEPSSNIETEPHHYINTTRSLALGPVQSSKGDGDIVFIDSHTVELAEGQVEVETEAFVLSKSQNLTSSQLGEYSGIVRRVGKGVRDFSPGDAVVALALDGVVGANHARVPSSHVSRRPDSLSPAVAAALFLPTIAASYAIHHLAQISKGKSIVLIHGVLTDIGRASVAVARVLGATITATAISRQEALEITQQLNIQLENIIVSRPSLLRPQLDELFQLDAIIHISKDSVPVAAWSCLKPFGQVVVFNSSSSIAFPSPPPENATIHYCHITNLVQAQPDRLADLVSLAAPALERIPFKGIDLCIQDVAQVPEAIRLVRQGGKVILQASPSSLVRTVIPSSISMDWEAVDAAYVVAGGMGDLGRRLLLLMARRGAMHLVTLSRRSIEPEDHRSFQGQLQLVQPGCRLYCLVCDITSESSVQNAADTLTRTGVPPVRGVIQSAVTLHDRTLETMTFDDFFAVAHAKVDGTLVLERVFASPHLHFFLMLSSAVNITGASGQANYNAGNAVQDAIAHDRGPGFLSMNIGWIEDAINTSNNKTILQGLWRTGLRPILGQELSRYFDHLLGAASSHSRMRQAIIGFNAASLSHTSASNSNVHSAMFCHIRGSLAAEESSSSTNNVRSFGEVVEGGDLDTIIDFISSAITRRLMTLISMDDDQIKDRNGSILDLGLDSLVAIELRNWITREFKSPLQSSEILTDQPIRDLAEKVASRSSLLASGLDKEVPAGSLENGDVEDRHSAGAIRPSTSAHSTVKYVSENLPPLPLPPLADTLRLFEDSRRAIDTANHRRNTSDAVHDFLKGPGPRLYNSLQETNSDVIADAYDRQVYLERREPLPEQGPFIFIHSIQAPVHSQARRAAILTIAAFDFIRLLARGDIATDTLHGEPITTEGRNWLFYATRRPGIGIDRMERHVPNNTVAVLRRGHVFQLRLPDVEQALDMLAVTRVYDDILAASCDAIPPICTLTADERDSWALFRLDLERHPQNAAVLACIDTAAFVMCLDDESPTSSGERYTQFMINGAHRPFANRWLDKTLQFAVTANGISAEIYEHSKLDGIDTNRLHAHIARAILAHPPSETADISSFSSPYAVQELMWEPSSATLQRIEHVRTQCQVYGPLDHQVFDVASLGLRSLRGFRLQPNATAHLTVLLALYLVDGEIRPAWEKVSLGTFARGRVEWVQTISPAARAFIEAAAASYTDSNNRTRVRALLHQATSTHSRSLVAAGRGLGAVRALYALRGAAQEQEKELPELFRTHSWDATRRGGPGQDVKLGFMRLAPDDDANGNVGATPGDDDINGRWDEAGFLVCGERGVYVHCNVWEKHARFAASGRPAYVTKLCKAMRRASCMITSLLEDPSKRPT.

One can recognise a Ketosynthase family 3 (KS3) domain in the interval 100–526; sequence IEPIAIVGAS…GTNAHAIMER (427 aa). Active-site for beta-ketoacyl synthase activity residues include Cys274, His410, and His449. The segment at 627-938 is malonyl-CoA:ACP transacylase (MAT) domain; it reads YVFTGQGAQW…LAGPIRQCLA (312 aa). Ser721 functions as the For malonyltransferase activity in the catalytic mechanism. Residues 1027 to 1160 form an N-terminal hotdog fold region; the sequence is HHLLGVRMTE…GVVEGVMTLD (134 aa). The tract at residues 1027–1311 is dehydratase (DH) domain; it reads HHLLGVRMTE…RASNIDMTIV (285 aa). A PKS/mFAS DH domain is found at 1027–1334; sequence HHLLGVRMTE…SRSLAAHVDG (308 aa). The active-site Proton acceptor; for dehydratase activity is the His1059. Residues 1179–1334 are C-terminal hotdog fold; it reads NRTMVIPEEL…SRSLAAHVDG (156 aa). The active-site Proton donor; for dehydratase activity is Asp1247. An enoylreductase (ER) domain region spans residues 1735 to 2037; the sequence is LGPVQSSKGD…LVRQGGKVIL (303 aa). Residues 2062–2240 form a catalytic ketoreductase (KR) domain region; sequence AAYVVAGGMG…FLSMNIGWIE (179 aa). A Carrier domain is found at 2345–2423; that stretch reads TIIDFISSAI…DLAEKVASRS (79 aa). Ser2383 is modified (O-(pantetheine 4'-phosphoryl)serine). Positions 2831–3062 are choline/carnitine acyltransferase (cAT) domain; that stretch reads FDVASLGLRS…SCMITSLLED (232 aa).

The protein operates within secondary metabolite biosynthesis. Functionally, highly reducing polyketide synthase; part of the gene cluster that mediates the biosynthesis of (2Z,4E,6E,10E)-9-hydroxydodeca-2,4,6,10-tetraenoic acid (BAA), (2E,4E,6E,10E)-9-hydroxydodeca-2,4,6,10-tetraenoic acid (BAB), and (2Z,4E,6E)-octa-2,4,6-trienedioic acid (PBA). The highly reducing polyketide synthase Ba17a is sufficent to produce PBA and BAA. The still to be characterized protein Ba17b leads to an increased production of BAA as well as to the production of the new compound BAB. BAA does not possess insecticidal activity against G.mellonella larvae, however, both BAA and BAB increase the growth of Candida albicans and BAA can mitigate the fungicidal effects of fluconazole over C.albicans, suggesting that generalist pathogens such as M.anisopliae, can potentially manipulate the yeast microbiota found in arthropods (and anywhere else) by the activity of compounds as BAA and BAB. The sequence is that of Highly reducing polyketide synthase 17 from Metarhizium anisopliae (Entomophthora anisopliae).